Here is a 205-residue protein sequence, read N- to C-terminus: Outer-membrane lipoprotein LolB (205 aa).

Positions 1–17 (MFLRHVIVFSLIALLTG) are cleaved as a signal peptide. C18 is lipidated: N-palmitoyl cysteine. A lipid anchor (S-diacylglycerol cysteine) is attached at C18.

This sequence belongs to the LolB family. Monomer.

The protein localises to the cell outer membrane. In terms of biological role, plays a critical role in the incorporation of lipoproteins in the outer membrane after they are released by the LolA protein. The chain is Outer-membrane lipoprotein LolB from Pseudomonas syringae pv. syringae (strain B728a).